We begin with the raw amino-acid sequence, 86 residues long: Exodeoxyribonuclease 7 small subunit (86 aa).

The tract at residues 1–26 (MQDELFETEKAPQKNTKNAKNAPKKS) is disordered.

This sequence belongs to the XseB family. As to quaternary structure, heterooligomer composed of large and small subunits.

It is found in the cytoplasm. It carries out the reaction Exonucleolytic cleavage in either 5'- to 3'- or 3'- to 5'-direction to yield nucleoside 5'-phosphates.. Functionally, bidirectionally degrades single-stranded DNA into large acid-insoluble oligonucleotides, which are then degraded further into small acid-soluble oligonucleotides. The chain is Exodeoxyribonuclease 7 small subunit from Helicobacter pylori (strain HPAG1).